Here is a 190-residue protein sequence, read N- to C-terminus: Shikimate kinase (190 aa).

Residue 13-18 (GAGKTT) participates in ATP binding. Residue threonine 17 coordinates Mg(2+). Substrate-binding residues include aspartate 35, arginine 59, and glycine 81. Arginine 119 contributes to the ATP binding site. Arginine 138 is a binding site for substrate.

Belongs to the shikimate kinase family. Monomer. Requires Mg(2+) as cofactor.

The protein resides in the cytoplasm. The enzyme catalyses shikimate + ATP = 3-phosphoshikimate + ADP + H(+). It functions in the pathway metabolic intermediate biosynthesis; chorismate biosynthesis; chorismate from D-erythrose 4-phosphate and phosphoenolpyruvate: step 5/7. Its function is as follows. Catalyzes the specific phosphorylation of the 3-hydroxyl group of shikimic acid using ATP as a cosubstrate. The chain is Shikimate kinase from Ralstonia nicotianae (strain ATCC BAA-1114 / GMI1000) (Ralstonia solanacearum).